A 270-amino-acid chain; its full sequence is 3-phenylpropionate-dihydrodiol/cinnamic acid-dihydrodiol dehydrogenase (270 aa).

10 to 34 (FITGGGSGLGLALVERFIEEGAQVA) is an NAD(+) binding site. Ser143 provides a ligand contact to substrate. Tyr156 functions as the Proton acceptor in the catalytic mechanism.

It belongs to the short-chain dehydrogenases/reductases (SDR) family.

It carries out the reaction 3-(cis-5,6-dihydroxycyclohexa-1,3-dien-1-yl)propanoate + NAD(+) = 3-(2,3-dihydroxyphenyl)propanoate + NADH + H(+). It catalyses the reaction (2E)-3-(cis-5,6-dihydroxycyclohexa-1,3-dien-1-yl)prop-2-enoate + NAD(+) = (2E)-3-(2,3-dihydroxyphenyl)prop-2-enoate + NADH + H(+). The protein operates within aromatic compound metabolism; 3-phenylpropanoate degradation. In terms of biological role, converts 3-phenylpropionate-dihydrodiol (PP-dihydrodiol) and cinnamic acid-dihydrodiol (CI-dihydrodiol) into 3-(2,3-dihydroxylphenyl)propanoic acid (DHPP) and 2,3-dihydroxicinnamic acid (DHCI), respectively. The chain is 3-phenylpropionate-dihydrodiol/cinnamic acid-dihydrodiol dehydrogenase from Shigella flexneri serotype 5b (strain 8401).